A 393-amino-acid polypeptide reads, in one-letter code: Chorismate synthase (393 aa).

The NADP(+) site is built by Arg-40 and Arg-46. FMN contacts are provided by residues 129-131 (RSS), 249-250 (QA), Gly-301, 316-320 (KPIPT), and Arg-342.

The protein belongs to the chorismate synthase family. As to quaternary structure, homotetramer. FMNH2 is required as a cofactor.

It catalyses the reaction 5-O-(1-carboxyvinyl)-3-phosphoshikimate = chorismate + phosphate. The protein operates within metabolic intermediate biosynthesis; chorismate biosynthesis; chorismate from D-erythrose 4-phosphate and phosphoenolpyruvate: step 7/7. Catalyzes the anti-1,4-elimination of the C-3 phosphate and the C-6 proR hydrogen from 5-enolpyruvylshikimate-3-phosphate (EPSP) to yield chorismate, which is the branch point compound that serves as the starting substrate for the three terminal pathways of aromatic amino acid biosynthesis. This reaction introduces a second double bond into the aromatic ring system. This chain is Chorismate synthase, found in Geotalea daltonii (strain DSM 22248 / JCM 15807 / FRC-32) (Geobacter daltonii).